The primary structure comprises 232 residues: Transcriptional regulatory protein CpxR (232 aa).

In terms of domain architecture, Response regulatory spans 3–115; the sequence is KILLVDDDRE…ELVARIRAIL (113 aa). Asp-51 carries the post-translational modification 4-aspartylphosphate. Residues 131 to 230 constitute a DNA-binding region (ompR/PhoB-type); that stretch reads SPTLEVDALS…LRGRGYLMVS (100 aa).

As to quaternary structure, interacts with cognate sensor kinase CpxA. Post-translationally, phosphorylated by CpxA.

Its subcellular location is the cytoplasm. Its activity is regulated as follows. The two-component system is activated by envelope stress such as overexpression of some (misfolded) periplasmic proteins. In terms of biological role, response regulator member of the two-component regulatory system CpxA/CpxR which responds to envelope stress response by activating or, in some cases, repressing expression of downstream genes. Binds to the promoter regions of various genes in vitro, including ompC, cpxP, ryhB and mrkA and, when CpxR is phosphorylated, pecO. Represses expression of the major pilin of type 3 fimbriae MrkA as well as that of type 1 fimbriae FimA. Repression of expression of MrkA appears to be indirect, mediated by activation of the iron homeostasis regulator RyhB. The protein is Transcriptional regulatory protein CpxR of Klebsiella pneumoniae subsp. pneumoniae (strain HS11286).